Consider the following 200-residue polypeptide: uncharacterized protein (200 aa).

This is an uncharacterized protein from Ureaplasma parvum serovar 3 (strain ATCC 700970).